The sequence spans 615 residues: DNA mismatch repair protein MutL (615 aa).

The interval 363–397 is disordered; it reads FAEPAAREPVAPRYTPAPASGSRPAAPWPNAQPGY. Low complexity predominate over residues 364–391; the sequence is AEPAAREPVAPRYTPAPASGSRPAAPWP.

This sequence belongs to the DNA mismatch repair MutL/HexB family.

Functionally, this protein is involved in the repair of mismatches in DNA. It is required for dam-dependent methyl-directed DNA mismatch repair. May act as a 'molecular matchmaker', a protein that promotes the formation of a stable complex between two or more DNA-binding proteins in an ATP-dependent manner without itself being part of a final effector complex. The sequence is that of DNA mismatch repair protein MutL from Escherichia coli O9:H4 (strain HS).